Reading from the N-terminus, the 207-residue chain is Thymidylate kinase (207 aa).

10 to 17 contributes to the ATP binding site; it reads GIEGSGKS.

The protein belongs to the thymidylate kinase family.

It carries out the reaction dTMP + ATP = dTDP + ADP. Phosphorylation of dTMP to form dTDP in both de novo and salvage pathways of dTTP synthesis. This is Thymidylate kinase from Halothermothrix orenii (strain H 168 / OCM 544 / DSM 9562).